We begin with the raw amino-acid sequence, 339 residues long: Ketol-acid reductoisomerase (NADP(+)) (339 aa).

The KARI N-terminal Rossmann domain maps to 1 to 182 (MRVYYDRDAD…GGGRAGIIET (182 aa)). Residues 24-27 (YGSQ), arginine 48, serine 51, serine 53, and 83-86 (DELQ) contribute to the NADP(+) site. Histidine 108 is a catalytic residue. NADP(+) is bound at residue glycine 134. Residues 183–328 (TFKEECETDL…AKLRDMMPWI (146 aa)) form the KARI C-terminal knotted domain. The Mg(2+) site is built by aspartate 191, glutamate 195, glutamate 227, and glutamate 231. Substrate is bound at residue serine 252.

It belongs to the ketol-acid reductoisomerase family. Requires Mg(2+) as cofactor.

It carries out the reaction (2R)-2,3-dihydroxy-3-methylbutanoate + NADP(+) = (2S)-2-acetolactate + NADPH + H(+). It catalyses the reaction (2R,3R)-2,3-dihydroxy-3-methylpentanoate + NADP(+) = (S)-2-ethyl-2-hydroxy-3-oxobutanoate + NADPH + H(+). It participates in amino-acid biosynthesis; L-isoleucine biosynthesis; L-isoleucine from 2-oxobutanoate: step 2/4. Its pathway is amino-acid biosynthesis; L-valine biosynthesis; L-valine from pyruvate: step 2/4. In terms of biological role, involved in the biosynthesis of branched-chain amino acids (BCAA). Catalyzes an alkyl-migration followed by a ketol-acid reduction of (S)-2-acetolactate (S2AL) to yield (R)-2,3-dihydroxy-isovalerate. In the isomerase reaction, S2AL is rearranged via a Mg-dependent methyl migration to produce 3-hydroxy-3-methyl-2-ketobutyrate (HMKB). In the reductase reaction, this 2-ketoacid undergoes a metal-dependent reduction by NADPH to yield (R)-2,3-dihydroxy-isovalerate. This is Ketol-acid reductoisomerase (NADP(+)) from Bradyrhizobium diazoefficiens (strain JCM 10833 / BCRC 13528 / IAM 13628 / NBRC 14792 / USDA 110).